The sequence spans 130 residues: Small ribosomal subunit protein uS9 (130 aa).

The disordered stretch occupies residues 111–130; it reads KERRKYGLKKARKAPQFSKR.

The protein belongs to the universal ribosomal protein uS9 family.

This Thermoanaerobacter sp. (strain X514) protein is Small ribosomal subunit protein uS9.